Here is a 351-residue protein sequence, read N- to C-terminus: Glycerol-1-phosphate dehydrogenase [NAD(P)+] (351 aa).

Residues 97–101 and 119–122 contribute to the NAD(+) site; these read GKVID and TSPS. D124 serves as a coordination point for substrate. S128 contacts NAD(+). D171 is a substrate binding site. Residues D171 and H251 each coordinate Zn(2+). H255 provides a ligand contact to substrate. Zn(2+) is bound at residue H267.

It belongs to the glycerol-1-phosphate dehydrogenase family. In terms of assembly, homodimer. Zn(2+) serves as cofactor.

The protein localises to the cytoplasm. It catalyses the reaction sn-glycerol 1-phosphate + NAD(+) = dihydroxyacetone phosphate + NADH + H(+). The enzyme catalyses sn-glycerol 1-phosphate + NADP(+) = dihydroxyacetone phosphate + NADPH + H(+). Its pathway is membrane lipid metabolism; glycerophospholipid metabolism. Its function is as follows. Catalyzes the NAD(P)H-dependent reduction of dihydroxyacetonephosphate (DHAP or glycerone phosphate) to glycerol 1-phosphate (G1P). The G1P thus generated is used as the glycerophosphate backbone of phospholipids in the cellular membranes of Archaea. This is Glycerol-1-phosphate dehydrogenase [NAD(P)+] from Saccharolobus islandicus (strain M.16.27) (Sulfolobus islandicus).